We begin with the raw amino-acid sequence, 391 residues long: Testis-expressed protein 9 (391 aa).

2 disordered regions span residues 1–31 (MAGR…PGPD) and 65–85 (QEVR…EDDY). Positions 188–351 (IGTEAQIRFL…EKQKGELMIG (164 aa)) form a coiled coil.

It is found in the cytoplasm. It localises to the cytoskeleton. Its subcellular location is the microtubule organizing center. The protein resides in the centrosome. The protein localises to the centriolar satellite. This Homo sapiens (Human) protein is Testis-expressed protein 9 (TEX9).